Consider the following 187-residue polypeptide: NADH-quinone oxidoreductase subunit B (187 aa).

[4Fe-4S] cluster contacts are provided by C66, C67, C131, and C161.

The protein belongs to the complex I 20 kDa subunit family. In terms of assembly, NDH-1 is composed of 14 different subunits. Subunits NuoB, C, D, E, F, and G constitute the peripheral sector of the complex. The cofactor is [4Fe-4S] cluster.

The protein resides in the cell inner membrane. The catalysed reaction is a quinone + NADH + 5 H(+)(in) = a quinol + NAD(+) + 4 H(+)(out). NDH-1 shuttles electrons from NADH, via FMN and iron-sulfur (Fe-S) centers, to quinones in the respiratory chain. The immediate electron acceptor for the enzyme in this species is believed to be ubiquinone. Couples the redox reaction to proton translocation (for every two electrons transferred, four hydrogen ions are translocated across the cytoplasmic membrane), and thus conserves the redox energy in a proton gradient. The sequence is that of NADH-quinone oxidoreductase subunit B from Methylocella silvestris (strain DSM 15510 / CIP 108128 / LMG 27833 / NCIMB 13906 / BL2).